A 158-amino-acid chain; its full sequence is Transcriptional regulator MraZ (158 aa).

SpoVT-AbrB domains follow at residues 7 to 66 (KEQH…EPSV) and 95 to 138 (LDCV…APEK).

The protein belongs to the MraZ family. Forms oligomers.

The protein localises to the cytoplasm. Its subcellular location is the nucleoid. The protein is Transcriptional regulator MraZ of Prosthecochloris aestuarii (strain DSM 271 / SK 413).